Reading from the N-terminus, the 341-residue chain is Ribulose-5-phosphate reductase 1 (341 aa).

Residues Cys-38, His-64, Glu-65, and Glu-144 each contribute to the Zn(2+) site.

Belongs to the zinc-containing alcohol dehydrogenase family. Heterodimer together with TarI. Can also form a dimer of heterodimers. Zn(2+) is required as a cofactor.

The catalysed reaction is D-ribitol 5-phosphate + NADP(+) = D-ribulose 5-phosphate + NADPH + H(+). The protein operates within cell wall biogenesis; poly(ribitol phosphate) teichoic acid biosynthesis. In terms of biological role, catalyzes the NADPH dependent reduction of D-ribulose 5-phosphate to D-ribitol 5-phosphate. In Staphylococcus aureus (strain NCTC 8325 / PS 47), this protein is Ribulose-5-phosphate reductase 1.